A 360-amino-acid polypeptide reads, in one-letter code: Probable dual-specificity RNA methyltransferase RlmN (360 aa).

Glu91 (proton acceptor) is an active-site residue. The Radical SAM core domain occupies 97–335 (QHYGQSVCVT…CVVRQEHGTD (239 aa)). Residues Cys104 and Cys340 are joined by a disulfide bond. [4Fe-4S] cluster is bound by residues Cys111, Cys115, and Cys118. S-adenosyl-L-methionine is bound by residues 163–164 (GE), Ser195, 218–220 (SLH), and Asn296. Cys340 functions as the S-methylcysteine intermediate in the catalytic mechanism.

Belongs to the radical SAM superfamily. RlmN family. [4Fe-4S] cluster serves as cofactor.

Its subcellular location is the cytoplasm. The catalysed reaction is adenosine(2503) in 23S rRNA + 2 reduced [2Fe-2S]-[ferredoxin] + 2 S-adenosyl-L-methionine = 2-methyladenosine(2503) in 23S rRNA + 5'-deoxyadenosine + L-methionine + 2 oxidized [2Fe-2S]-[ferredoxin] + S-adenosyl-L-homocysteine. It carries out the reaction adenosine(37) in tRNA + 2 reduced [2Fe-2S]-[ferredoxin] + 2 S-adenosyl-L-methionine = 2-methyladenosine(37) in tRNA + 5'-deoxyadenosine + L-methionine + 2 oxidized [2Fe-2S]-[ferredoxin] + S-adenosyl-L-homocysteine. In terms of biological role, specifically methylates position 2 of adenine 2503 in 23S rRNA and position 2 of adenine 37 in tRNAs. The chain is Probable dual-specificity RNA methyltransferase RlmN from Streptococcus equi subsp. equi (strain 4047).